A 38-amino-acid chain; its full sequence is uncharacterized protein (38 aa).

This is an uncharacterized protein from Haemophilus influenzae (strain ATCC 51907 / DSM 11121 / KW20 / Rd).